Here is a 249-residue protein sequence, read N- to C-terminus: MLIQAVTIFPEMFDSITRYGVTGRANRQGIWQFEAVNPRKFADNRLGYIDDRPFGGGPGMIMMAPPLHAAIEHAKAQSSQTAKVIYLSPQGKPLTHQKAAELAELPHLILLCGRYEGIDERLLQTSVDEEISIGDFVVSGGELPAMMLMDAVLRLVPGVLGDMQSAEQDSFSSGILDCPHYTKPLEFQGMAVPEVLRSGNHGLIAEWRLEQSLRRTLERRPDLLEKRVLIPKESRLLETIRQEQREIQS.

Residues G113 and I133–V138 contribute to the S-adenosyl-L-methionine site.

The protein belongs to the RNA methyltransferase TrmD family. In terms of assembly, homodimer.

The protein localises to the cytoplasm. The enzyme catalyses guanosine(37) in tRNA + S-adenosyl-L-methionine = N(1)-methylguanosine(37) in tRNA + S-adenosyl-L-homocysteine + H(+). Its function is as follows. Specifically methylates guanosine-37 in various tRNAs. The polypeptide is tRNA (guanine-N(1)-)-methyltransferase (Neisseria meningitidis serogroup C (strain 053442)).